Consider the following 226-residue polypeptide: V-type proton ATPase subunit E (226 aa).

Belongs to the V-ATPase E subunit family. V-ATPase is a heteromultimeric enzyme composed of a peripheral catalytic V1 complex (components A to H) attached to an integral membrane V0 proton pore complex (components: a, c, c', c'', d, e, f and VOA1).

The protein localises to the vacuole membrane. In terms of biological role, subunit of the V1 complex of vacuolar(H+)-ATPase (V-ATPase), a multisubunit enzyme composed of a peripheral complex (V1) that hydrolyzes ATP and a membrane integral complex (V0) that translocates protons. V-ATPase is responsible for acidifying and maintaining the pH of intracellular compartments. The chain is V-type proton ATPase subunit E (VMA4) from Candida albicans (Yeast).